We begin with the raw amino-acid sequence, 1427 residues long: DNA-directed RNA polymerase subunit beta' (1427 aa).

4 residues coordinate Zn(2+): Cys-66, Cys-68, Cys-81, and Cys-84. Residues Asp-472, Asp-474, and Asp-476 each contribute to the Mg(2+) site. Positions 815, 889, 896, and 899 each coordinate Zn(2+).

Belongs to the RNA polymerase beta' chain family. In terms of assembly, the RNAP catalytic core consists of 2 alpha, 1 beta, 1 beta' and 1 omega subunit. When a sigma factor is associated with the core the holoenzyme is formed, which can initiate transcription. Mg(2+) is required as a cofactor. Requires Zn(2+) as cofactor.

The enzyme catalyses RNA(n) + a ribonucleoside 5'-triphosphate = RNA(n+1) + diphosphate. Functionally, DNA-dependent RNA polymerase catalyzes the transcription of DNA into RNA using the four ribonucleoside triphosphates as substrates. The polypeptide is DNA-directed RNA polymerase subunit beta' (Bacteroides thetaiotaomicron (strain ATCC 29148 / DSM 2079 / JCM 5827 / CCUG 10774 / NCTC 10582 / VPI-5482 / E50)).